The following is a 560-amino-acid chain: Secreted RxLR effector protein 142 (560 aa).

The first 22 residues, 1–22 (MRRAYFVAIALLVAAGGKTAAG), serve as a signal peptide directing secretion. Disordered regions lie at residues 48–73 (QSQNLQESRDPKDDLKLSAGNEERTP) and 354–377 (INRPAPSGPSTNGATTSNGGLNNQ). Residues 54 to 72 (ESRDPKDDLKLSAGNEERT) are compositionally biased toward basic and acidic residues. Positions 56 to 71 (RDPKDDLKLSAGNEER) match the RxLR-dEER motif. Residues 361 to 377 (GPSTNGATTSNGGLNNQ) show a composition bias toward polar residues.

The protein belongs to the RxLR effector family.

The protein resides in the secreted. It localises to the host nucleus. Its function is as follows. Secreted effector that completely suppresses the host cell death induced by cell death-inducing proteins. This chain is Secreted RxLR effector protein 142, found in Plasmopara viticola (Downy mildew of grapevine).